The primary structure comprises 430 residues: Probable aspartic-type endopeptidase TRV_06366 (430 aa).

Positions 1-17 (MHVSTLLVAVLLPLALS) are cleaved as a signal peptide. A propeptide spans 18 to 87 (KPTPRKKTSS…SKATAGSGKE (70 aa)) (activation peptide). The disordered stretch occupies residues 61 to 104 (HEMEGYHPQPISKLPGNSKATAGSGKEGVESQDEKGEVVNNPTD). Positions 87 to 104 (EGVESQDEKGEVVNNPTD) are enriched in basic and acidic residues. A Peptidase A1 domain is found at 109–427 (FLSPVTIGGQ…DQRGPSISLA (319 aa)). Asp125 is an active-site residue. N-linked (GlcNAc...) asparagine glycosylation is present at Asn306. The active site involves Asp314.

Belongs to the peptidase A1 family.

It is found in the secreted. In terms of biological role, probable secreted aspartic-type endopeptidase which contributes to virulence. The protein is Probable aspartic-type endopeptidase TRV_06366 of Trichophyton verrucosum (strain HKI 0517).